We begin with the raw amino-acid sequence, 143 residues long: uncharacterized protein (143 aa).

The tract at residues 13-143 (SLQFPHHRPG…QDAAHQCRIQ (131 aa)) is disordered. The segment covering 17-31 (PHHRPGLRRHRKNTT) has biased composition (basic residues). Composition is skewed to basic and acidic residues over residues 35-48 (AAVD…RGDA), 84-96 (DGRE…AEEK), and 112-133 (EKQH…DHAG). Residues 134–143 (QDAAHQCRIQ) are compositionally biased toward low complexity.

This is an uncharacterized protein from Homo sapiens (Human).